The chain runs to 387 residues: MENVVIIDAVRTPMGRSKGGAFRHVRAEDLSAHLMRAVISRNPGLNAAEIDDIYWGCVQQTLEQGFNIARNASLLAEIPHSVPAVTVNRLCGSSMQALHDGARAIMVGDAKISLIGGVEHMGHVPMNHGVDFHPGMGRTVAKAAGMMGLTAEMLAKIHNISRQSQDEFAFRSHQRAYAATQAGHFAKEIVATNGHDAEGVLKRFDFDEVIRPETNLSGLAALRPAFDPVNGTVTAGTSSALSDGASAMLIMSESRAKSLGLTPRARIRSMAVVGCDPSIMGYGPVPASQLALKRAGLELADIGLFELNEAFAAQSLACLKGLGLLESMDDKVNLNGGAIALGHPLGCSGARISTTLLNLMERRDVQFGLATMCIGLGQGIATVFERL.

Cys-91 functions as the Acyl-thioester intermediate in the catalytic mechanism. Residues His-343 and Cys-373 each act as proton acceptor in the active site.

This sequence belongs to the thiolase-like superfamily. Thiolase family. Heterotetramer of two alpha chains (FadB) and two beta chains (FadA).

The protein localises to the cytoplasm. It catalyses the reaction an acyl-CoA + acetyl-CoA = a 3-oxoacyl-CoA + CoA. It functions in the pathway lipid metabolism; fatty acid beta-oxidation. Catalyzes the final step of fatty acid oxidation in which acetyl-CoA is released and the CoA ester of a fatty acid two carbons shorter is formed. In Yersinia pseudotuberculosis serotype O:1b (strain IP 31758), this protein is 3-ketoacyl-CoA thiolase.